Here is a 58-residue protein sequence, read N- to C-terminus: Small ribosomal subunit protein bS21 (58 aa).

The segment at 25-58 (SKSGTLQEYRKREHYEKPSVKRKKKSEAARKRKF) is disordered. A compositionally biased stretch (basic and acidic residues) spans 32-43 (EYRKREHYEKPS). Positions 44-58 (VKRKKKSEAARKRKF) are enriched in basic residues.

It belongs to the bacterial ribosomal protein bS21 family.

The sequence is that of Small ribosomal subunit protein bS21 from Oceanobacillus iheyensis (strain DSM 14371 / CIP 107618 / JCM 11309 / KCTC 3954 / HTE831).